We begin with the raw amino-acid sequence, 362 residues long: uncharacterized protein (362 aa).

Residues 314–323 (GEEKEPKQES) show a composition bias toward basic and acidic residues. The tract at residues 314–362 (GEEKEPKQESQEQLFNPFTIDEMLTEEQQQQQEEENNATEEEGDTVKLG) is disordered. Over residues 345–356 (QEEENNATEEEG) the composition is skewed to acidic residues.

This is an uncharacterized protein from Acidianus two-tailed virus (ATV).